The following is a 108-amino-acid chain: MAEEKQHHRLFHHKNREEEGGPVDHKKKVKHHSHLQKIGELGAVAAGAYALHEKHKAKKDPENAHKHKIKQEIAAVAAVGAGGFAFHEHHQKKEAKKEKKAAEKGRHH.

2 disordered regions span residues 1 to 34 and 84 to 108; these read MAEE…HHSH and FAFH…GRHH. The segment covering 15–24 has biased composition (basic and acidic residues); the sequence is NREEEGGPVD. Residues 25-34 show a composition bias toward basic residues; sequence HKKKVKHHSH. Basic and acidic residues predominate over residues 95 to 108; that stretch reads AKKEKKAAEKGRHH.

Belongs to the abscisic acid and water stress-induced protein family.

This is Abscisic stress-ripening protein 3 from Solanum lycopersicum (Tomato).